A 506-amino-acid chain; its full sequence is RNA2 polyprotein (506 aa).

Belongs to the nepoviruses RNA2 polyprotein family. In terms of processing, specific enzymatic cleavages in vivo by the P1 encoded 3C-like protease yield mature proteins.

The protein resides in the host cell junction. It localises to the host plasmodesma. It is found in the virion. Functionally, the movement protein is assembled into tubules that allow the transport of virions from cell to cell. The protein is RNA2 polyprotein of Beta vulgaris subsp. vulgaris (Beet).